Consider the following 259-residue polypeptide: Thiazole synthase (259 aa).

Lysine 98 functions as the Schiff-base intermediate with DXP in the catalytic mechanism. 1-deoxy-D-xylulose 5-phosphate is bound by residues glycine 159, 185–186, and 207–208; these read AG and NS.

Belongs to the ThiG family. Homotetramer. Forms heterodimers with either ThiH or ThiS.

Its subcellular location is the cytoplasm. The enzyme catalyses [ThiS sulfur-carrier protein]-C-terminal-Gly-aminoethanethioate + 2-iminoacetate + 1-deoxy-D-xylulose 5-phosphate = [ThiS sulfur-carrier protein]-C-terminal Gly-Gly + 2-[(2R,5Z)-2-carboxy-4-methylthiazol-5(2H)-ylidene]ethyl phosphate + 2 H2O + H(+). The protein operates within cofactor biosynthesis; thiamine diphosphate biosynthesis. Catalyzes the rearrangement of 1-deoxy-D-xylulose 5-phosphate (DXP) to produce the thiazole phosphate moiety of thiamine. Sulfur is provided by the thiocarboxylate moiety of the carrier protein ThiS. In vitro, sulfur can be provided by H(2)S. The chain is Thiazole synthase from Chlorobium phaeobacteroides (strain BS1).